Here is a 253-residue protein sequence, read N- to C-terminus: Triosephosphate isomerase (253 aa).

Residue N9–K11 participates in substrate binding. Catalysis depends on H97, which acts as the Electrophile. Catalysis depends on E169, which acts as the Proton acceptor. Residues G175, S215, and G236 to G237 each bind substrate.

Belongs to the triosephosphate isomerase family. As to quaternary structure, homodimer.

The protein localises to the cytoplasm. It catalyses the reaction D-glyceraldehyde 3-phosphate = dihydroxyacetone phosphate. It functions in the pathway carbohydrate biosynthesis; gluconeogenesis. The protein operates within carbohydrate degradation; glycolysis; D-glyceraldehyde 3-phosphate from glycerone phosphate: step 1/1. Its function is as follows. Involved in the gluconeogenesis. Catalyzes stereospecifically the conversion of dihydroxyacetone phosphate (DHAP) to D-glyceraldehyde-3-phosphate (G3P). The polypeptide is Triosephosphate isomerase (Staphylococcus aureus (strain Mu50 / ATCC 700699)).